The sequence spans 188 residues: Anaphase-promoting complex subunit 10 (188 aa).

The region spanning 4-187 (NSNINSNSRL…SPEVSMFQTL (184 aa)) is the DOC domain.

Belongs to the APC10 family. In terms of assembly, the APC/C is composed of at least 13 subunits that stay tightly associated throughout the cell cycle: anapc1, anapc2, anapc3, anapc4, anapc5, anapc6, anapc7, anapc8, anapc10, anapc11, cdc20, cdc26 and cdh1.

The protein resides in the nucleus. Its pathway is protein modification; protein ubiquitination. Its function is as follows. Component of the anaphase promoting complex/cyclosome (APC/C), a cell cycle-regulated E3 ubiquitin-protein ligase complex that controls progression through mitosis and the G1 phase of the cell cycle. The chain is Anaphase-promoting complex subunit 10 (anapc10) from Dictyostelium discoideum (Social amoeba).